Reading from the N-terminus, the 287-residue chain is Oxaloacetate decarboxylase (287 aa).

Ser-50 contacts substrate. Residue Asp-88 participates in Mg(2+) binding. 2 residues coordinate substrate: Arg-159 and His-235.

This sequence belongs to the isocitrate lyase/PEP mutase superfamily. Oxaloacetate decarboxylase family. As to quaternary structure, homotetramer; dimer of dimers. The cofactor is Mg(2+).

The catalysed reaction is oxaloacetate + H(+) = pyruvate + CO2. Catalyzes the decarboxylation of oxaloacetate into pyruvate. Seems to play a role in maintaining cellular concentrations of bicarbonate and pyruvate. This is Oxaloacetate decarboxylase from Pseudomonas paraeruginosa (strain DSM 24068 / PA7) (Pseudomonas aeruginosa (strain PA7)).